We begin with the raw amino-acid sequence, 312 residues long: Homoserine O-acetyltransferase (312 aa).

Cys142 (acyl-thioester intermediate) is an active-site residue. Substrate-binding residues include Lys163 and Ser194. The active-site Proton acceptor is the His237. Glu239 is an active-site residue. A substrate-binding site is contributed by Arg251.

The protein belongs to the MetA family.

The protein resides in the cytoplasm. It carries out the reaction L-homoserine + acetyl-CoA = O-acetyl-L-homoserine + CoA. Its pathway is amino-acid biosynthesis; L-methionine biosynthesis via de novo pathway; O-acetyl-L-homoserine from L-homoserine: step 1/1. In terms of biological role, transfers an acetyl group from acetyl-CoA to L-homoserine, forming acetyl-L-homoserine. The polypeptide is Homoserine O-acetyltransferase (Catenibacterium mitsuokai (strain DSM 15897 / JCM 10609 / CCUG 48821 A / CIP 106738 / RCA14-39)).